Reading from the N-terminus, the 615-residue chain is Chromosomal replication initiator protein DnaA (615 aa).

Residues 1 to 88 (MSEGQINLAM…RVAVTVDPSA (88 aa)) form a domain I, interacts with DnaA modulators region. The segment at 85 to 272 (DPSAVPPSAP…PTSGGPDQLN (188 aa)) is disordered. Positions 88 to 269 (AVPPSAPTEE…STNPTSGGPD (182 aa)) are domain II. Composition is skewed to low complexity over residues 94 to 112 (PTEE…PAPD) and 173 to 190 (PSSA…VAES). Residues 270 to 486 (QLNPKYTFDT…GALIRVTAFA (217 aa)) form a domain III, AAA+ region region. ATP-binding residues include glycine 314, glycine 316, lysine 317, and threonine 318. The segment at 487 to 615 (SLNRQSVDLH…QQAHHNHHHL (129 aa)) is domain IV, binds dsDNA.

The protein belongs to the DnaA family. Oligomerizes as a right-handed, spiral filament on DNA at oriC.

It localises to the cytoplasm. In terms of biological role, plays an essential role in the initiation and regulation of chromosomal replication. ATP-DnaA binds to the origin of replication (oriC) to initiate formation of the DNA replication initiation complex once per cell cycle. Binds the DnaA box (a 9 base pair repeat at the origin) and separates the double-stranded (ds)DNA. Forms a right-handed helical filament on oriC DNA; dsDNA binds to the exterior of the filament while single-stranded (ss)DNA is stabiized in the filament's interior. The ATP-DnaA-oriC complex binds and stabilizes one strand of the AT-rich DNA unwinding element (DUE), permitting loading of DNA polymerase. After initiation quickly degrades to an ADP-DnaA complex that is not apt for DNA replication. Binds acidic phospholipids. In Thermobifida fusca (strain YX), this protein is Chromosomal replication initiator protein DnaA.